A 316-amino-acid polypeptide reads, in one-letter code: 4-hydroxy-3-methylbut-2-enyl diphosphate reductase (316 aa).

Cys-12 contributes to the [4Fe-4S] cluster binding site. (2E)-4-hydroxy-3-methylbut-2-enyl diphosphate contacts are provided by His-41 and His-74. Dimethylallyl diphosphate is bound by residues His-41 and His-74. Positions 41 and 74 each coordinate isopentenyl diphosphate. Cys-96 provides a ligand contact to [4Fe-4S] cluster. His-124 is a (2E)-4-hydroxy-3-methylbut-2-enyl diphosphate binding site. Residue His-124 coordinates dimethylallyl diphosphate. His-124 is a binding site for isopentenyl diphosphate. The active-site Proton donor is Glu-126. Thr-168 provides a ligand contact to (2E)-4-hydroxy-3-methylbut-2-enyl diphosphate. Cys-198 provides a ligand contact to [4Fe-4S] cluster. (2E)-4-hydroxy-3-methylbut-2-enyl diphosphate contacts are provided by Ser-226, Ser-227, Asn-228, and Ser-270. Dimethylallyl diphosphate contacts are provided by Ser-226, Ser-227, Asn-228, and Ser-270. Isopentenyl diphosphate-binding residues include Ser-226, Ser-227, Asn-228, and Ser-270.

The protein belongs to the IspH family. The cofactor is [4Fe-4S] cluster.

The enzyme catalyses isopentenyl diphosphate + 2 oxidized [2Fe-2S]-[ferredoxin] + H2O = (2E)-4-hydroxy-3-methylbut-2-enyl diphosphate + 2 reduced [2Fe-2S]-[ferredoxin] + 2 H(+). It catalyses the reaction dimethylallyl diphosphate + 2 oxidized [2Fe-2S]-[ferredoxin] + H2O = (2E)-4-hydroxy-3-methylbut-2-enyl diphosphate + 2 reduced [2Fe-2S]-[ferredoxin] + 2 H(+). Its pathway is isoprenoid biosynthesis; dimethylallyl diphosphate biosynthesis; dimethylallyl diphosphate from (2E)-4-hydroxy-3-methylbutenyl diphosphate: step 1/1. It functions in the pathway isoprenoid biosynthesis; isopentenyl diphosphate biosynthesis via DXP pathway; isopentenyl diphosphate from 1-deoxy-D-xylulose 5-phosphate: step 6/6. Functionally, catalyzes the conversion of 1-hydroxy-2-methyl-2-(E)-butenyl 4-diphosphate (HMBPP) into a mixture of isopentenyl diphosphate (IPP) and dimethylallyl diphosphate (DMAPP). Acts in the terminal step of the DOXP/MEP pathway for isoprenoid precursor biosynthesis. This Acinetobacter baumannii (strain AB307-0294) protein is 4-hydroxy-3-methylbut-2-enyl diphosphate reductase.